The following is a 269-amino-acid chain: MSNRVQGGFDNNSGNNQSAQKQQAEKIPQITVPLNCFMINQIVKAAKENPQAHSGNHYEWYGAFENAIITAKFEFLQSINDSPKIMGKLSDSTGCIEVVIQKSKMSDELPEFVQAYEIELQNNGNRHKYVRAMLKMRKNAQIQLLYFSIVNDANEISRHGLDLCLRYLQRKHGIEDFMHMTNDKAHNNHNASAQKVHYQIDRNQQPKEQVLELMRQILKHNPNDQIPKSKIIEFFQSQLNQVQINQILQQLVSANEIFSVGSDNYLLNV.

Residues 1–22 (MSNRVQGGFDNNSGNNQSAQKQ) show a composition bias toward polar residues. Residues 1–25 (MSNRVQGGFDNNSGNNQSAQKQQAE) form a disordered region. A DNA-binding region (OB) is located at residues 69–149 (ITAKFEFLQS…AQIQLLYFSI (81 aa)).

The protein belongs to the replication factor A protein 2 family. In terms of assembly, component of the replication protein A complex (RPA), a heterotrimeric complex composed of RPA1, RPA2/TEB2 and RPA3/TEB3. Component of the telomerase holoenzyme complex, composed of the catalytic core (the catalytic subunit TERT, the telomerase RNA template component TER and TAP65/p65), which is associated with two heterotrimeric subcomplexes: (i) the replication protein A (RPA)-related subcomplex, composed of TEB1, RPA2/TEB2 and RPA3/TEB3 and (ii) the CST-like subcomplex, composed of TAP75/p75, TAP45/p45 and TAP19/p19. TEB1 and the CST-like subcomplex are tethered to the catalytic core by TAP50/p50.

The protein resides in the nucleus. The protein localises to the chromosome. Its subcellular location is the telomere. Component of the heterotrimeric replication protein A (RPA) and holoenzyme telomerase ribonucleoprotein complexes. As part of the RPA complex, binds and stabilizes single-stranded DNA (ssDNA) intermediates, that form during DNA replication or upon DNA stress. It prevents their reannealing and in parallel, recruits and activates different proteins and complexes involved in DNA metabolism. Thereby, it plays an essential role both in DNA replication and the cellular response to DNA damage. In the cellular response to DNA damage, the RPA complex controls DNA repair and DNA damage checkpoint activation. Also part of a subcomplex of the holoenzyme telomerase ribonucleoprotein complex: this subcomplex that contains TEB1, RPA2/TEB2, RPA3/TEB3, but not RPA1, mediates the recruitment of telomerase to telomeric DNA via specific interaction between TEB1 and telomeric ssDNA. In the holoenzyme telomerase ribonucleoprotein complex, RPA2/TEB2 and RPA3/TEB3 act as assembly factors for TEB1 incorporation into telomerase holoenzyme. In the holoenzyme telomerase ribonucleoprotein complex, RPA2/TEB2 does not contribute to ssDNA affinity, while it contributes to ssDNA affinity in the RPA complex. This chain is Replication protein A 32 kDa subunit (RPA2), found in Tetrahymena thermophila (strain SB210).